The chain runs to 162 residues: N5-carboxyaminoimidazole ribonucleotide mutase (162 aa).

Substrate contacts are provided by S11, D14, and R41.

Belongs to the AIR carboxylase family. Class I subfamily.

The catalysed reaction is 5-carboxyamino-1-(5-phospho-D-ribosyl)imidazole + H(+) = 5-amino-1-(5-phospho-D-ribosyl)imidazole-4-carboxylate. The protein operates within purine metabolism; IMP biosynthesis via de novo pathway; 5-amino-1-(5-phospho-D-ribosyl)imidazole-4-carboxylate from 5-amino-1-(5-phospho-D-ribosyl)imidazole (N5-CAIR route): step 2/2. Catalyzes the conversion of N5-carboxyaminoimidazole ribonucleotide (N5-CAIR) to 4-carboxy-5-aminoimidazole ribonucleotide (CAIR). This is N5-carboxyaminoimidazole ribonucleotide mutase from Bacillus subtilis (strain 168).